The sequence spans 345 residues: Anthranilate phosphoribosyltransferase (345 aa).

5-phospho-alpha-D-ribose 1-diphosphate-binding positions include Gly80, 83 to 84 (GD), Thr88, 90 to 93 (NIST), 108 to 116 (KHGNRSVTS), and Ser120. Gly80 contacts anthranilate. Ser92 serves as a coordination point for Mg(2+). Asn111 provides a ligand contact to anthranilate. Position 166 (Arg166) interacts with anthranilate. Positions 229 and 230 each coordinate Mg(2+).

It belongs to the anthranilate phosphoribosyltransferase family. In terms of assembly, homodimer. Mg(2+) serves as cofactor.

It catalyses the reaction N-(5-phospho-beta-D-ribosyl)anthranilate + diphosphate = 5-phospho-alpha-D-ribose 1-diphosphate + anthranilate. The protein operates within amino-acid biosynthesis; L-tryptophan biosynthesis; L-tryptophan from chorismate: step 2/5. Catalyzes the transfer of the phosphoribosyl group of 5-phosphorylribose-1-pyrophosphate (PRPP) to anthranilate to yield N-(5'-phosphoribosyl)-anthranilate (PRA). The chain is Anthranilate phosphoribosyltransferase from Chlorobium phaeobacteroides (strain BS1).